The sequence spans 285 residues: MKFGIVINTSRERAITLARELMAWLTEHGQDYVFDTESALRLQTARTAPIEELNKQCDAFVSLGGDGTLLFTSHYSVTKPVIGINVGYLGFLTEFSPDEMVPAIEKVLSGNYSIHNRSQLEATFRTDGKIEQLRALNDVVIEKGTYPRIPTFVIKLDGELLGSYRADGIIIATSTGSTAYSMSAGGPIIAPKSSVFVITPICPHMLTVRPIVINDEKIIEVSIDAPDGEFPLNGDGHLRKLLAPQETVTVKKSQQVINLVANENRDYCEILRTKLLWGREHDSTQ.

The active-site Proton acceptor is the Asp66. Residues 66–67, 137–138, Arg148, Arg165, Asp167, and 178–183 contribute to the NAD(+) site; these read DG, ND, and TAYSMS.

The protein belongs to the NAD kinase family. Requires a divalent metal cation as cofactor.

The protein localises to the cytoplasm. The catalysed reaction is NAD(+) + ATP = ADP + NADP(+) + H(+). In terms of biological role, involved in the regulation of the intracellular balance of NAD and NADP, and is a key enzyme in the biosynthesis of NADP. Catalyzes specifically the phosphorylation on 2'-hydroxyl of the adenosine moiety of NAD to yield NADP. The sequence is that of NAD kinase from Chlorobium phaeobacteroides (strain DSM 266 / SMG 266 / 2430).